The chain runs to 78 residues: Small ribosomal subunit protein uS17 (78 aa).

It belongs to the universal ribosomal protein uS17 family. In terms of assembly, part of the 30S ribosomal subunit.

One of the primary rRNA binding proteins, it binds specifically to the 5'-end of 16S ribosomal RNA. The chain is Small ribosomal subunit protein uS17 from Sinorhizobium medicae (strain WSM419) (Ensifer medicae).